The primary structure comprises 342 residues: Galactose mutarotase (342 aa).

Residues 81–82 (NR) and His-107 each bind beta-D-galactose. Ser-124 carries the post-translational modification Phosphoserine. His-176 functions as the Proton donor in the catalytic mechanism. Beta-D-galactose contacts are provided by residues 176–178 (HSY), Asp-243, Gln-279, and Glu-307. The active-site Proton acceptor is Glu-307.

It belongs to the aldose epimerase family. Monomer.

Its subcellular location is the cytoplasm. The catalysed reaction is alpha-D-galactose = beta-D-galactose. It catalyses the reaction alpha-D-glucose = beta-D-glucose. It participates in carbohydrate metabolism; hexose metabolism. Its pathway is carbohydrate metabolism; galactose metabolism. In terms of biological role, mutarotase that catalyzes the interconversion of beta-D-galactose and alpha-D-galactose during galactose metabolism. Beta-D-galactose is metabolized in the liver into glucose 1-phosphate, the primary metabolic fuel, by the action of four enzymes that constitute the Leloir pathway: GALM, GALK1 (galactokinase), GALT (galactose-1-phosphate uridylyltransferase) and GALE (UDP-galactose-4'-epimerase). Involved in the maintenance of the equilibrium between the beta- and alpha-anomers of galactose, therefore ensuring a sufficient supply of the alpha-anomer for GALK1. Also active on D-glucose although shows a preference for galactose over glucose. This Bos taurus (Bovine) protein is Galactose mutarotase (GALM).